Consider the following 597-residue polypeptide: Elongation factor 4 (597 aa).

A tr-type G domain is found at 2 to 184 (QHIRNFSIIA…AVISRIPPPK (183 aa)). GTP-binding positions include 14 to 19 (DHGKST) and 131 to 134 (NKID).

Belongs to the TRAFAC class translation factor GTPase superfamily. Classic translation factor GTPase family. LepA subfamily.

It localises to the cell inner membrane. It carries out the reaction GTP + H2O = GDP + phosphate + H(+). Required for accurate and efficient protein synthesis under certain stress conditions. May act as a fidelity factor of the translation reaction, by catalyzing a one-codon backward translocation of tRNAs on improperly translocated ribosomes. Back-translocation proceeds from a post-translocation (POST) complex to a pre-translocation (PRE) complex, thus giving elongation factor G a second chance to translocate the tRNAs correctly. Binds to ribosomes in a GTP-dependent manner. This chain is Elongation factor 4, found in Nitrosospira multiformis (strain ATCC 25196 / NCIMB 11849 / C 71).